We begin with the raw amino-acid sequence, 607 residues long: UvrABC system protein C (607 aa).

A GIY-YIG domain is found at 15–93 (RKPGVYRMLD…IKELKPPYNI (79 aa)). A UVR domain is found at 203–238 (REVADQLSTDMEAAAAALEFEKAALLRDQLAAIQAV). Positions 542 to 551 (HRARRGKARK) are enriched in basic residues. The tract at residues 542-561 (HRARRGKARKQSTLDEIPGI) is disordered.

The protein belongs to the UvrC family. As to quaternary structure, interacts with UvrB in an incision complex.

It localises to the cytoplasm. Functionally, the UvrABC repair system catalyzes the recognition and processing of DNA lesions. UvrC both incises the 5' and 3' sides of the lesion. The N-terminal half is responsible for the 3' incision and the C-terminal half is responsible for the 5' incision. This Alcanivorax borkumensis (strain ATCC 700651 / DSM 11573 / NCIMB 13689 / SK2) protein is UvrABC system protein C.